The primary structure comprises 110 residues: NADH dehydrogenase [ubiquinone] iron-sulfur protein 6, mitochondrial (110 aa).

A mitochondrion-targeting transit peptide spans 1–22 (MASNLLKALIRSQILPSSRRNF).

This sequence belongs to the complex I NDUFS6 subunit family. Complex I is composed of at least 49 different subunits. This is a component of the iron-sulfur (IP) fragment of the enzyme.

The protein localises to the mitochondrion inner membrane. Functionally, accessory subunit of the mitochondrial membrane respiratory chain NADH dehydrogenase (Complex I), that is believed not to be involved in catalysis. Complex I functions in the transfer of electrons from NADH to the respiratory chain. The immediate electron acceptor for the enzyme is believed to be ubiquinone. In Arabidopsis thaliana (Mouse-ear cress), this protein is NADH dehydrogenase [ubiquinone] iron-sulfur protein 6, mitochondrial.